The following is an 88-amino-acid chain: DNA-directed RNA polymerase subunit omega (88 aa).

Belongs to the RNA polymerase subunit omega family. As to quaternary structure, the RNAP catalytic core consists of 2 alpha, 1 beta, 1 beta' and 1 omega subunit. When a sigma factor is associated with the core the holoenzyme is formed, which can initiate transcription.

The enzyme catalyses RNA(n) + a ribonucleoside 5'-triphosphate = RNA(n+1) + diphosphate. In terms of biological role, promotes RNA polymerase assembly. Latches the N- and C-terminal regions of the beta' subunit thereby facilitating its interaction with the beta and alpha subunits. This chain is DNA-directed RNA polymerase subunit omega, found in Haemophilus influenzae (strain 86-028NP).